A 310-amino-acid chain; its full sequence is Probable manganese-dependent inorganic pyrophosphatase (310 aa).

Residues H9, D13, D15, D76, H98, and D150 each contribute to the Mn(2+) site.

This sequence belongs to the PPase class C family. Mn(2+) is required as a cofactor.

Its subcellular location is the cytoplasm. It catalyses the reaction diphosphate + H2O = 2 phosphate + H(+). In Streptococcus thermophilus (strain CNRZ 1066), this protein is Probable manganese-dependent inorganic pyrophosphatase.